The sequence spans 426 residues: Melibiose/raffinose/stachyose-binding protein MelE (426 aa).

A signal peptide spans 1 to 18; it reads MKHTFVLFLSLILLVLPG. A lipid anchor (N-palmitoyl cysteine) is attached at C19. A lipid anchor (S-diacylglycerol cysteine) is attached at C19.

This sequence belongs to the bacterial solute-binding protein 1 family. In terms of assembly, the complex is composed of two ATP-binding proteins (MsmX), two transmembrane proteins (MelC and MelD) and a solute-binding protein (MelE).

Its subcellular location is the cell membrane. Functionally, part of the ABC transporter complex MelEDC-MsmX involved in melibiose, raffinose and stachyose import. Binds melibiose, raffinose and stachyose. The chain is Melibiose/raffinose/stachyose-binding protein MelE from Bacillus subtilis (strain 168).